We begin with the raw amino-acid sequence, 139 residues long: Putative pre-16S rRNA nuclease (139 aa).

The protein belongs to the YqgF nuclease family.

It localises to the cytoplasm. In terms of biological role, could be a nuclease involved in processing of the 5'-end of pre-16S rRNA. The chain is Putative pre-16S rRNA nuclease from Pectobacterium carotovorum subsp. carotovorum (strain PC1).